The following is a 95-amino-acid chain: Large ribosomal subunit protein uL23 (95 aa).

This sequence belongs to the universal ribosomal protein uL23 family. In terms of assembly, part of the 50S ribosomal subunit. Contacts protein L29, and trigger factor when it is bound to the ribosome.

In terms of biological role, one of the early assembly proteins it binds 23S rRNA. One of the proteins that surrounds the polypeptide exit tunnel on the outside of the ribosome. Forms the main docking site for trigger factor binding to the ribosome. The polypeptide is Large ribosomal subunit protein uL23 (Geobacillus kaustophilus (strain HTA426)).